Here is a 100-residue protein sequence, read N- to C-terminus: Small ribosomal subunit protein uS14c (100 aa).

The protein belongs to the universal ribosomal protein uS14 family. In terms of assembly, part of the 30S ribosomal subunit.

It is found in the plastid. The protein localises to the chloroplast. Functionally, binds 16S rRNA, required for the assembly of 30S particles. The protein is Small ribosomal subunit protein uS14c of Thalassiosira pseudonana (Marine diatom).